A 530-amino-acid chain; its full sequence is Autoinducer-2 kinase (530 aa).

It belongs to the FGGY kinase family.

It is found in the cytoplasm. The catalysed reaction is (S)-4,5-dihydroxypentane-2,3-dione + ATP = (2S)-2-hydroxy-3,4-dioxopentyl phosphate + ADP + H(+). Its function is as follows. Catalyzes the phosphorylation of autoinducer-2 (AI-2) to phospho-AI-2, which subsequently inactivates the transcriptional regulator LsrR and leads to the transcription of the lsr operon. Phosphorylates the ring-open form of (S)-4,5-dihydroxypentane-2,3-dione (DPD), which is the precursor to all AI-2 signaling molecules, at the C5 position. In Yersinia pseudotuberculosis serotype O:1b (strain IP 31758), this protein is Autoinducer-2 kinase.